We begin with the raw amino-acid sequence, 746 residues long: Bud site selection protein 7 (746 aa).

The CHS5-binding stretch occupies residues Leu-733–Ala-746.

Belongs to the CHAPS family. Component of the CHS5/6 complex composed of the 4 CHAPS proteins BCH1, BCH2v, BUD7, and CHS6 as well as at least CHS5 and GTP-bound ARF1. The complex interacts with the cargo protein CHS3.

The protein localises to the golgi apparatus. Its subcellular location is the trans-Golgi network membrane. Its function is as follows. Member of the CHS5-ARF1P-binding proteins (CHAPS) which mediates export of specific cargo proteins, including chitin synthase CHS3. May be involved in positioning the proximal bud pole signal. This chain is Bud site selection protein 7 (BUD7), found in Saccharomyces cerevisiae (strain ATCC 204508 / S288c) (Baker's yeast).